The primary structure comprises 214 residues: Lazarillo protein (214 aa).

Residues 1 to 21 (MIRRGLLSVTAALVLLSVSCS) form the signal peptide. Residues Asn38, Asn74, Asn84, Asn90, Asn130, Asn158, and Asn161 are each glycosylated (N-linked (GlcNAc...) asparagine). Residue Ala192 is the site of GPI-anchor amidated alanine attachment. Residues 193–214 (GAEHVVGAMLSVAIASLFALLH) constitute a propeptide, removed in mature form.

This sequence belongs to the calycin superfamily. Lipocalin family. N-glycosylated. In terms of processing, contains disulfide bonds. As to expression, expressed by a subset of neuroblasts, ganglion mother cells and neurons of the CNS; by all sensory neurons of the PNS.

The protein resides in the cell membrane. Functionally, putative role in axonal outgrowth and guidance, required for the navigation of identified commissural neurons. Could be a receptor the midline morphogen. This is Lazarillo protein from Schistocerca americana (American grasshopper).